We begin with the raw amino-acid sequence, 275 residues long: Phosphonoacetaldehyde hydrolase (275 aa).

Asp15 (nucleophile) is an active-site residue. Mg(2+)-binding residues include Asp15 and Ala17. Catalysis depends on Lys56, which acts as the Schiff-base intermediate with substrate. Asp189 provides a ligand contact to Mg(2+).

This sequence belongs to the HAD-like hydrolase superfamily. PhnX family. As to quaternary structure, homodimer. Requires Mg(2+) as cofactor.

The enzyme catalyses phosphonoacetaldehyde + H2O = acetaldehyde + phosphate + H(+). With respect to regulation, inhibited by phosphite, moderately inhibited by phosphonic acids, the corresponding aminophosphonic acids activate the enzyme. Involved in phosphonate degradation. This chain is Phosphonoacetaldehyde hydrolase, found in Pseudomonas aeruginosa (strain ATCC 15692 / DSM 22644 / CIP 104116 / JCM 14847 / LMG 12228 / 1C / PRS 101 / PAO1).